We begin with the raw amino-acid sequence, 152 residues long: Ribonuclease pancreatic (152 aa).

The first 24 residues, 1-24, serve as a signal peptide directing secretion; that stretch reads MALDKSVILLPLLVLVLLVLGCLG. Lys31 and Arg34 together coordinate substrate. The active-site Proton acceptor is His36. N-linked (GlcNAc...) asparagine glycosylation is present at Asn46. 4 disulfide bridges follow: Cys50–Cys108, Cys64–Cys119, Cys82–Cys134, and Cys89–Cys96. Residues 65–69, Lys90, and Arg109 each bind substrate; that span reads KPVNT. The N-linked (GlcNAc...) asparagine glycan is linked to Asn112. His143 acts as the Proton donor in catalysis.

The protein belongs to the pancreatic ribonuclease family. In terms of assembly, monomer. Interacts with and forms tight 1:1 complexes with RNH1. Dimerization of two such complexes may occur. Interaction with RNH1 inhibits this protein.

The protein localises to the secreted. It catalyses the reaction an [RNA] containing cytidine + H2O = an [RNA]-3'-cytidine-3'-phosphate + a 5'-hydroxy-ribonucleotide-3'-[RNA].. The catalysed reaction is an [RNA] containing uridine + H2O = an [RNA]-3'-uridine-3'-phosphate + a 5'-hydroxy-ribonucleotide-3'-[RNA].. Its function is as follows. Endonuclease that catalyzes the cleavage of RNA on the 3' side of pyrimidine nucleotides. Acts on single-stranded and double-stranded RNA. This is Ribonuclease pancreatic (RNASE1) from Miopithecus talapoin (Angolan talapoin).